The sequence spans 158 residues: Transcription elongation factor GreA (158 aa).

Residues 53-75 are a coiled coil; sequence AKERQGQVEATIGDLEDKLSRAQ.

Belongs to the GreA/GreB family.

Its function is as follows. Necessary for efficient RNA polymerase transcription elongation past template-encoded arresting sites. The arresting sites in DNA have the property of trapping a certain fraction of elongating RNA polymerases that pass through, resulting in locked ternary complexes. Cleavage of the nascent transcript by cleavage factors such as GreA or GreB allows the resumption of elongation from the new 3'terminus. GreA releases sequences of 2 to 3 nucleotides. The sequence is that of Transcription elongation factor GreA from Sphingopyxis alaskensis (strain DSM 13593 / LMG 18877 / RB2256) (Sphingomonas alaskensis).